A 780-amino-acid polypeptide reads, in one-letter code: Cullin-1 (780 aa).

One can recognise a Cullin neddylation domain in the interval 710-771 (DRKSVISACI…EKEYMLRTEG (62 aa)). Lysine 724 participates in a covalent cross-link: Glycyl lysine isopeptide (Lys-Gly) (interchain with G-Cter in NEDD8).

Belongs to the cullin family. In terms of assembly, component of an SCF (SKP1-CUL1-F-box protein) E3 ubiquitin ligase complex composed of cul-1, fsn-1, rpm-1 and skr-1. Interacts with Skp1-related proteins skr-1, skr-2, skr-3, skr-4, skr-7, skr-8, skr-9 and skr-10. Post-translationally, neddylated; which enhances the ubiquitination activity of SCF. As to expression, ubiquitous.

The protein resides in the cytoplasm. It functions in the pathway protein modification; protein ubiquitination. Its function is as follows. Probable core component of multiple cullin-RING-based SCF (SKP1-CUL1-F-box) E3 ubiquitin-protein ligase complexes which mediate the ubiquitination and subsequent proteasomal degradation of target proteins. As a scaffold protein may contribute to catalysis through positioning of the substrate and the ubiquitin-conjugating enzyme. Required for developmentally programmed transitions from the G1 phase of the cell cycle to the G0 phase or the apoptotic pathway. The sequence is that of Cullin-1 (cul-1) from Caenorhabditis elegans.